The sequence spans 323 residues: Probable cell division protein WhiA (323 aa).

Positions 275–309 (TLKELGEMLTTGQVSKSGINHRLRKLDQIAERLRS) form a DNA-binding region, H-T-H motif.

The protein belongs to the WhiA family.

Its function is as follows. Involved in cell division and chromosome segregation. This is Probable cell division protein WhiA from Listeria innocua serovar 6a (strain ATCC BAA-680 / CLIP 11262).